We begin with the raw amino-acid sequence, 249 residues long: Zinc finger protein mnm-2 (249 aa).

The interval Pro20–Pro65 is disordered. The segment covering Leu24–Thr52 has biased composition (acidic residues). C2H2-type zinc fingers lie at residues Tyr168–His190, Phe196–His218, and Tyr224–His246.

In larva and adult, expressed in the M3 pharyngeal motor neurons, extrapharyngeal neurons in the head, the PQR tail neurons, rectal cells, vulva cells, the spermetheca-uterine valve, body wall muscle cells and neurons of the ventral nerve cord. In the embryo, expressed in pharyngeal cells, extrapharyngeal head neurons and within the tail. Expressed in body wall muscle cells during late embryonic stages. Expressed in the mother cells of the M2 and M3 pharyngeal motor neurons precursor cells at the embryonic bean stage and subsequently in the M2 and M3 cells as they are born. Expression is sustained only in the two M3 cells up to at least the 5-day-old adult. In contrast, expression gradually declines in the M2 cells beginning from the time of their birth, and is completely undetectable by the time of hatching.

Its subcellular location is the nucleus. Its function is as follows. Required in the M3 pharyngeal motor neuron to guide the growth cone of the sister M2 motor neuron during axon development. The sequence is that of Zinc finger protein mnm-2 from Caenorhabditis elegans.